We begin with the raw amino-acid sequence, 301 residues long: uncharacterized protein (301 aa).

The N-terminal stretch at 1-22 is a signal peptide; the sequence is MPGRFTVALVIALGGTCGVADA. The GP-PDE domain occupies 31-300; it reads PMIVAHRAGT…DSPLAAQQWR (270 aa).

This is an uncharacterized protein from Mycobacterium tuberculosis (strain ATCC 25618 / H37Rv).